The chain runs to 152 residues: Superoxide dismutase [Cu-Zn] 1 (152 aa).

Residues histidine 45, histidine 47, and histidine 62 each coordinate Cu cation. Cysteine 56 and cysteine 145 are disulfide-bonded. Zn(2+) contacts are provided by histidine 62, histidine 70, histidine 79, and aspartate 82. Residue histidine 119 coordinates Cu cation.

This sequence belongs to the Cu-Zn superoxide dismutase family. Homodimer. Interacts with DJ1A and CCS. Cu cation is required as a cofactor. The cofactor is Zn(2+). As to expression, expressed in leaves (at protein level). The spatial localization is regulated by miR398-mediated silencing. Mostly present in flowers, old rosette leaves and inflorescence, and, to a lower extent, in cauline leaves, stems and roots.

The protein localises to the cytoplasm. Its subcellular location is the cytosol. The protein resides in the nucleus. The enzyme catalyses 2 superoxide + 2 H(+) = H2O2 + O2. In terms of biological role, destroys radicals which are normally produced within the cells and which are toxic to biological systems. This chain is Superoxide dismutase [Cu-Zn] 1 (CSD1), found in Arabidopsis thaliana (Mouse-ear cress).